We begin with the raw amino-acid sequence, 288 residues long: Wilms tumor protein homolog (288 aa).

The interval 1–21 (QGYSTVAFDGPPSYGHAPSHH) is disordered. The short motif at 90–98 (MTWNQMNLG) is the 9aaTAD element. 3 C2H2-type zinc fingers span residues 162–186 (FMCAYPGCNKRYFKLSHLQMHSRKH), 192–216 (YQCDFKDCERRFSRSDQLKRHQRRH), and 222–244 (FQCKTCQRKFSRSDHLKTHTRTH). Important for interaction with target DNA regions lie at residues 206–220 (SDQLKRHQRRHTGVK) and 232–240 (SRSDHLKTH). The short motif at 247 to 249 (KTS) is the KTS motif element. Residues 253–277 (FSCRWPSCQKKFARSDELVRHHNMH) form a C2H2-type 4 zinc finger.

This sequence belongs to the EGR C2H2-type zinc-finger protein family.

The protein localises to the nucleus speckle. It is found in the nucleus. It localises to the nucleoplasm. Its subcellular location is the cytoplasm. Its function is as follows. Transcription factor that plays an important role in cellular development and cell survival. Recognizes and binds to the DNA sequence 5'-GCG(T/G)GGGCG-3'. Regulates the expression of numerous target genes. Plays an essential role for development of the urogenital system. It has a tumor suppressor as well as an oncogenic role in tumor formation. Function may be isoform-specific: isoforms lacking the KTS motif may act as transcription factors. Isoforms containing the KTS motif may bind mRNA and play a role in mRNA metabolism or splicing. The polypeptide is Wilms tumor protein homolog (WT1) (Alligator mississippiensis (American alligator)).